We begin with the raw amino-acid sequence, 118 residues long: 5-hydroxyisourate hydrolase (118 aa).

Histidine 7, arginine 46, and tyrosine 115 together coordinate substrate.

This sequence belongs to the transthyretin family. 5-hydroxyisourate hydrolase subfamily. Homotetramer.

The catalysed reaction is 5-hydroxyisourate + H2O = 5-hydroxy-2-oxo-4-ureido-2,5-dihydro-1H-imidazole-5-carboxylate + H(+). Its function is as follows. Catalyzes the hydrolysis of 5-hydroxyisourate (HIU) to 2-oxo-4-hydroxy-4-carboxy-5-ureidoimidazoline (OHCU). This Brucella suis biovar 1 (strain 1330) protein is 5-hydroxyisourate hydrolase.